Consider the following 485-residue polypeptide: NADH-quinone oxidoreductase subunit N (485 aa).

14 consecutive transmembrane segments (helical) span residues 8 to 28, 35 to 55, 71 to 91, 105 to 125, 127 to 147, 159 to 179, 203 to 223, 235 to 255, 271 to 291, 297 to 317, 326 to 346, 373 to 393, 408 to 430, and 455 to 475; these read LIAL…MLSI, FLNA…LWFV, GFAM…CTFA, FYLL…ANHL, ALFL…GYAF, YTIL…LVYA, LLAG…LVPF, PAPV…GVVM, IVLG…ALSQ, LLGY…IALQ, VGVY…VVSL, AAVM…LGFI, WWLV…RVAV, and IVVL…QPLI.

Belongs to the complex I subunit 2 family. In terms of assembly, NDH-1 is composed of 13 different subunits. Subunits NuoA, H, J, K, L, M, N constitute the membrane sector of the complex.

The protein resides in the cell inner membrane. The enzyme catalyses a quinone + NADH + 5 H(+)(in) = a quinol + NAD(+) + 4 H(+)(out). NDH-1 shuttles electrons from NADH, via FMN and iron-sulfur (Fe-S) centers, to quinones in the respiratory chain. The immediate electron acceptor for the enzyme in this species is believed to be ubiquinone. Couples the redox reaction to proton translocation (for every two electrons transferred, four hydrogen ions are translocated across the cytoplasmic membrane), and thus conserves the redox energy in a proton gradient. The polypeptide is NADH-quinone oxidoreductase subunit N (Citrobacter koseri (strain ATCC BAA-895 / CDC 4225-83 / SGSC4696)).